The following is a 332-amino-acid chain: D-alanine--D-alanine ligase (332 aa).

Residues 112–312 enclose the ATP-grasp domain; the sequence is KRIWRADGLP…YPDLCLRILA (201 aa). ATP is bound at residue 138–193; it reads FQELGAPMIVKPSREGSTIGLTKVTSLGQCEQAYRLAAQHDPEVLCEQFIDGDETT. The Mg(2+) site is built by Asp-265, Glu-279, and Asn-281.

The protein belongs to the D-alanine--D-alanine ligase family. Mg(2+) serves as cofactor. The cofactor is Mn(2+).

The protein resides in the cytoplasm. The enzyme catalyses 2 D-alanine + ATP = D-alanyl-D-alanine + ADP + phosphate + H(+). The protein operates within cell wall biogenesis; peptidoglycan biosynthesis. Cell wall formation. This chain is D-alanine--D-alanine ligase, found in Acidovorax ebreus (strain TPSY) (Diaphorobacter sp. (strain TPSY)).